The sequence spans 68 residues: Large ribosomal subunit protein uL29 (68 aa).

The protein belongs to the universal ribosomal protein uL29 family.

The polypeptide is Large ribosomal subunit protein uL29 (Rhodopseudomonas palustris (strain BisA53)).